The primary structure comprises 366 residues: tRNA/tmRNA (uracil-C(5))-methyltransferase (366 aa).

Positions 190, 218, 223, 239, and 299 each coordinate S-adenosyl-L-methionine. The active-site Nucleophile is Cys-324. Catalysis depends on Glu-358, which acts as the Proton acceptor.

Belongs to the class I-like SAM-binding methyltransferase superfamily. RNA M5U methyltransferase family. TrmA subfamily.

It catalyses the reaction uridine(54) in tRNA + S-adenosyl-L-methionine = 5-methyluridine(54) in tRNA + S-adenosyl-L-homocysteine + H(+). The enzyme catalyses uridine(341) in tmRNA + S-adenosyl-L-methionine = 5-methyluridine(341) in tmRNA + S-adenosyl-L-homocysteine + H(+). Functionally, dual-specificity methyltransferase that catalyzes the formation of 5-methyluridine at position 54 (m5U54) in all tRNAs, and that of position 341 (m5U341) in tmRNA (transfer-mRNA). This is tRNA/tmRNA (uracil-C(5))-methyltransferase from Escherichia coli O17:K52:H18 (strain UMN026 / ExPEC).